We begin with the raw amino-acid sequence, 151 residues long: Phosphopantetheine adenylyltransferase (151 aa).

Residue threonine 9 coordinates substrate. Residues 9–10 (TF) and histidine 17 contribute to the ATP site. 3 residues coordinate substrate: lysine 41, threonine 73, and arginine 87. Residues 88–90 (GIR), glutamate 98, and 122–128 (LTCVSST) each bind ATP.

It belongs to the bacterial CoaD family. In terms of assembly, homohexamer. Mg(2+) serves as cofactor.

It is found in the cytoplasm. It carries out the reaction (R)-4'-phosphopantetheine + ATP + H(+) = 3'-dephospho-CoA + diphosphate. It functions in the pathway cofactor biosynthesis; coenzyme A biosynthesis; CoA from (R)-pantothenate: step 4/5. In terms of biological role, reversibly transfers an adenylyl group from ATP to 4'-phosphopantetheine, yielding dephospho-CoA (dPCoA) and pyrophosphate. The polypeptide is Phosphopantetheine adenylyltransferase (Bacteroides thetaiotaomicron (strain ATCC 29148 / DSM 2079 / JCM 5827 / CCUG 10774 / NCTC 10582 / VPI-5482 / E50)).